The following is a 493-amino-acid chain: Alpha-amylase-related protein (493 aa).

Residues 1–19 (MFKFALTQTLCLAGSLSLA) form the signal peptide. At Gln-20 the chain carries Pyrrolidone carboxylic acid. A disulfide bond links Cys-47 and Cys-103. The Ca(2+) site is built by Asn-117, Gln-168, and Asp-177. A disulfide bond links Cys-156 and Cys-170. Arg-205 is a chloride binding site. The Nucleophile role is filled by Asp-207. His-211 is a binding site for Ca(2+). Glu-244 acts as the Proton donor in catalysis. Chloride contacts are provided by Asn-307 and Arg-342. Intrachain disulfides connect Cys-375/Cys-381, Cys-417/Cys-440, and Cys-447/Cys-459.

It belongs to the glycosyl hydrolase 13 family. As to quaternary structure, monomer. Requires Ca(2+) as cofactor. Chloride is required as a cofactor.

The protein resides in the secreted. It catalyses the reaction Endohydrolysis of (1-&gt;4)-alpha-D-glucosidic linkages in polysaccharides containing three or more (1-&gt;4)-alpha-linked D-glucose units.. The chain is Alpha-amylase-related protein (Amyrel) from Drosophila mauritiana (Fruit fly).